We begin with the raw amino-acid sequence, 145 residues long: D-aminoacyl-tRNA deacylase (145 aa).

The Gly-cisPro motif, important for rejection of L-amino acids signature appears at 137-138; it reads GP.

The protein belongs to the DTD family. As to quaternary structure, homodimer.

It localises to the cytoplasm. It carries out the reaction glycyl-tRNA(Ala) + H2O = tRNA(Ala) + glycine + H(+). The enzyme catalyses a D-aminoacyl-tRNA + H2O = a tRNA + a D-alpha-amino acid + H(+). In terms of biological role, an aminoacyl-tRNA editing enzyme that deacylates mischarged D-aminoacyl-tRNAs. Also deacylates mischarged glycyl-tRNA(Ala), protecting cells against glycine mischarging by AlaRS. Acts via tRNA-based rather than protein-based catalysis; rejects L-amino acids rather than detecting D-amino acids in the active site. By recycling D-aminoacyl-tRNA to D-amino acids and free tRNA molecules, this enzyme counteracts the toxicity associated with the formation of D-aminoacyl-tRNA entities in vivo and helps enforce protein L-homochirality. The sequence is that of D-aminoacyl-tRNA deacylase from Pseudomonas putida (strain ATCC 700007 / DSM 6899 / JCM 31910 / BCRC 17059 / LMG 24140 / F1).